Reading from the N-terminus, the 241-residue chain is DnaA regulatory inactivator Hda (241 aa).

This sequence belongs to the DnaA family. HdA subfamily. The active form seems to be an ADP-bound monomer. Forms the RIDA complex (regulatory inactivation of DnaA) of ATP-DnaA, ADP-Hda and the DNA-loaded beta sliding clamp (dnaN).

In terms of biological role, mediates the interaction of DNA replication initiator protein DnaA with DNA polymerase subunit beta sliding clamp (dnaN). Stimulates hydrolysis of ATP-DnaA to ADP-DnaA, rendering DnaA inactive for reinitiation, a process called regulatory inhibition of DnaA or RIDA. In Salmonella paratyphi A (strain ATCC 9150 / SARB42), this protein is DnaA regulatory inactivator Hda.